The sequence spans 105 residues: Insulin (105 aa).

An N-terminal signal peptide occupies residues Met-1–Ala-24. Intrachain disulfides connect Cys-31-Cys-91, Cys-43-Cys-104, and Cys-90-Cys-95. A propeptide spans Glu-57–Gln-82 (c peptide).

The protein belongs to the insulin family. In terms of assembly, heterodimer of a B chain and an A chain linked by two disulfide bonds.

It localises to the secreted. Functionally, insulin decreases blood glucose concentration. It increases cell permeability to monosaccharides, amino acids and fatty acids. It accelerates glycolysis, the pentose phosphate cycle, and glycogen synthesis in liver. This is Insulin (INS) from Bos taurus (Bovine).